The primary structure comprises 166 residues: NAD(P)H-quinone oxidoreductase subunit I, chloroplastic (166 aa).

2 4Fe-4S ferredoxin-type domains span residues Gly55–Lys84 and Leu95–Glu124. 8 residues coordinate [4Fe-4S] cluster: Cys64, Cys67, Cys70, Cys74, Cys104, Cys107, Cys110, and Cys114.

This sequence belongs to the complex I 23 kDa subunit family. As to quaternary structure, NDH is composed of at least 16 different subunits, 5 of which are encoded in the nucleus. [4Fe-4S] cluster serves as cofactor.

Its subcellular location is the plastid. It localises to the chloroplast thylakoid membrane. The catalysed reaction is a plastoquinone + NADH + (n+1) H(+)(in) = a plastoquinol + NAD(+) + n H(+)(out). It catalyses the reaction a plastoquinone + NADPH + (n+1) H(+)(in) = a plastoquinol + NADP(+) + n H(+)(out). Its function is as follows. NDH shuttles electrons from NAD(P)H:plastoquinone, via FMN and iron-sulfur (Fe-S) centers, to quinones in the photosynthetic chain and possibly in a chloroplast respiratory chain. The immediate electron acceptor for the enzyme in this species is believed to be plastoquinone. Couples the redox reaction to proton translocation, and thus conserves the redox energy in a proton gradient. The chain is NAD(P)H-quinone oxidoreductase subunit I, chloroplastic from Pericome caudata (Mountain tail-leaf).